A 238-amino-acid chain; its full sequence is Fish-egg lectin (238 aa).

Tandem repeats lie at residues 1–34 (LDCTVIDGNLKQIDAGSGSVVGVNNLNETFVLID), 35–68 (NVFTKISGSLKHFSVGPAGQLGVNTANNIFKYQS), 69–106 (GGFVQLAGLLKQVDAGGDQIIAGVNMYDDIYCLNMDAN), 107–156 (NKWP…CSGS), and 157–199 (GSFI…KPDG). The segment at 1–199 (LDCTVIDGNL…TGVTRSKPDG (199 aa)) is 5 X approximate tandem repeats. Disulfide bonds link C3–C234, C100–C153, C128–C133, and C208–C226. N27 is a glycosylation site (N-linked (GlcNAc...) asparagine).

The protein belongs to the tectonin family. In terms of tissue distribution, expressed in the eggs.

Its subcellular location is the secreted. In terms of biological role, lipopolysaccharide-binding protein with a very low agglutinating activity for human A-type erythrocytes and interacts with both Gram-positive and Gram-negative bacteria. The chain is Fish-egg lectin from Cyprinus carpio (Common carp).